The chain runs to 332 residues: Phosphate acetyltransferase (332 aa).

The protein belongs to the phosphate acetyltransferase and butyryltransferase family.

It is found in the cytoplasm. The catalysed reaction is acetyl-CoA + phosphate = acetyl phosphate + CoA. Its pathway is metabolic intermediate biosynthesis; acetyl-CoA biosynthesis; acetyl-CoA from acetate: step 2/2. The protein is Phosphate acetyltransferase (pta) of Acetivibrio thermocellus (strain ATCC 27405 / DSM 1237 / JCM 9322 / NBRC 103400 / NCIMB 10682 / NRRL B-4536 / VPI 7372) (Clostridium thermocellum).